The following is a 715-amino-acid chain: Probable serine/threonine-protein kinase MARK-B (715 aa).

The span at 24–37 (SCSSNSTTSSSSNS) shows a compositional bias: low complexity. The interval 24–65 (SCSSNSTTSSSSNSPKQNKVSPGYRNKPQQQQHKKGHKMGNY) is disordered. The Protein kinase domain occupies 65–320 (YLLGKTIGSG…LDEIKTHVWV (256 aa)). ATP-binding positions include 71–79 (IGSGTSSKV) and K94. Residue D187 is the Proton acceptor of the active site. The span at 335 to 344 (KVSDRLEKEQ) shows a compositional bias: basic and acidic residues. 2 disordered regions span residues 335–399 (KVSD…IPQN) and 446–530 (CSAP…HHST). Over residues 345–368 (QQQTPQHQQTQQQLQPQSQLQQHS) the composition is skewed to low complexity. A compositionally biased stretch (polar residues) spans 381 to 399 (IGSNRPLNQSSPNLTIPQN). Low complexity-rich tracts occupy residues 451 to 478 (SPHS…LSVS) and 487 to 513 (SSNP…INTS). The span at 517–527 (QYHHHHHHQNH) shows a compositional bias: basic residues. The region spanning 666 to 715 (LCPRNETINFEIEVCKVNGMDMYGIKFKRLSGDAWSYSSSCIKIVESLKL) is the KA1 domain.

It belongs to the protein kinase superfamily. CAMK Ser/Thr protein kinase family. SNF1 subfamily.

It carries out the reaction L-seryl-[protein] + ATP = O-phospho-L-seryl-[protein] + ADP + H(+). The enzyme catalyses L-threonyl-[protein] + ATP = O-phospho-L-threonyl-[protein] + ADP + H(+). The sequence is that of Probable serine/threonine-protein kinase MARK-B (mrkB) from Dictyostelium discoideum (Social amoeba).